Here is a 500-residue protein sequence, read N- to C-terminus: NAD(P)H-quinone oxidoreductase chain 4, chloroplastic (500 aa).

14 consecutive transmembrane segments (helical) span residues 4–24 (FPWL…IFFL), 37–57 (MSIC…HFQL), 87–107 (LGSI…AWPV), 113–130 (LFYF…GLFS), 134–154 (LLLF…LLSM), 167–187 (FILY…GMGL), 211–231 (ILFY…IPLH), 242–262 (HYST…YGLI), 272–292 (AHYL…IYAA), 313–333 (MGFI…GAIL), 334–354 (QILS…TACD), 386–406 (LALP…GLIT), 417–437 (LITF…LSML), and 462–482 (LFLL…PDFV).

The protein belongs to the complex I subunit 4 family.

Its subcellular location is the plastid. It is found in the chloroplast thylakoid membrane. The catalysed reaction is a plastoquinone + NADH + (n+1) H(+)(in) = a plastoquinol + NAD(+) + n H(+)(out). It catalyses the reaction a plastoquinone + NADPH + (n+1) H(+)(in) = a plastoquinol + NADP(+) + n H(+)(out). The sequence is that of NAD(P)H-quinone oxidoreductase chain 4, chloroplastic from Oryza nivara (Indian wild rice).